A 93-amino-acid polypeptide reads, in one-letter code: Aspartyl/glutamyl-tRNA(Asn/Gln) amidotransferase subunit C (93 aa).

The protein belongs to the GatC family. As to quaternary structure, heterotrimer of A, B and C subunits.

It catalyses the reaction L-glutamyl-tRNA(Gln) + L-glutamine + ATP + H2O = L-glutaminyl-tRNA(Gln) + L-glutamate + ADP + phosphate + H(+). The enzyme catalyses L-aspartyl-tRNA(Asn) + L-glutamine + ATP + H2O = L-asparaginyl-tRNA(Asn) + L-glutamate + ADP + phosphate + 2 H(+). Its function is as follows. Allows the formation of correctly charged Asn-tRNA(Asn) or Gln-tRNA(Gln) through the transamidation of misacylated Asp-tRNA(Asn) or Glu-tRNA(Gln) in organisms which lack either or both of asparaginyl-tRNA or glutaminyl-tRNA synthetases. The reaction takes place in the presence of glutamine and ATP through an activated phospho-Asp-tRNA(Asn) or phospho-Glu-tRNA(Gln). This Rubrobacter xylanophilus (strain DSM 9941 / JCM 11954 / NBRC 16129 / PRD-1) protein is Aspartyl/glutamyl-tRNA(Asn/Gln) amidotransferase subunit C.